Consider the following 413-residue polypeptide: Tyrosine--tRNA ligase (413 aa).

Positions 60–69 match the 'HIGH' region motif; it reads PTAPDIHIGH. Residues 244-248 carry the 'KMSKS' region motif; the sequence is KMSKS. Lys247 is an ATP binding site. Residues 352 to 412 enclose the S4 RNA-binding domain; sequence LGIAQLLKQA…GKRRFARVTL (61 aa).

This sequence belongs to the class-I aminoacyl-tRNA synthetase family. TyrS type 2 subfamily. Homodimer.

Its subcellular location is the cytoplasm. The enzyme catalyses tRNA(Tyr) + L-tyrosine + ATP = L-tyrosyl-tRNA(Tyr) + AMP + diphosphate + H(+). Functionally, catalyzes the attachment of tyrosine to tRNA(Tyr) in a two-step reaction: tyrosine is first activated by ATP to form Tyr-AMP and then transferred to the acceptor end of tRNA(Tyr). This Cupriavidus pinatubonensis (strain JMP 134 / LMG 1197) (Cupriavidus necator (strain JMP 134)) protein is Tyrosine--tRNA ligase.